Consider the following 947-residue polypeptide: Bifunctional glutamine synthetase adenylyltransferase/adenylyl-removing enzyme (947 aa).

An adenylyl removase region spans residues 1 to 440 (MTPLSSPLSQ…VFNELIGDDE (440 aa)). Positions 450-947 (SEPWREVWQD…ASWRKWLVAV (498 aa)) are adenylyl transferase.

The protein belongs to the GlnE family. The cofactor is Mg(2+).

It catalyses the reaction [glutamine synthetase]-O(4)-(5'-adenylyl)-L-tyrosine + phosphate = [glutamine synthetase]-L-tyrosine + ADP. The enzyme catalyses [glutamine synthetase]-L-tyrosine + ATP = [glutamine synthetase]-O(4)-(5'-adenylyl)-L-tyrosine + diphosphate. Its function is as follows. Involved in the regulation of glutamine synthetase GlnA, a key enzyme in the process to assimilate ammonia. When cellular nitrogen levels are high, the C-terminal adenylyl transferase (AT) inactivates GlnA by covalent transfer of an adenylyl group from ATP to specific tyrosine residue of GlnA, thus reducing its activity. Conversely, when nitrogen levels are low, the N-terminal adenylyl removase (AR) activates GlnA by removing the adenylyl group by phosphorolysis, increasing its activity. The regulatory region of GlnE binds the signal transduction protein PII (GlnB) which indicates the nitrogen status of the cell. The polypeptide is Bifunctional glutamine synthetase adenylyltransferase/adenylyl-removing enzyme (Salmonella paratyphi C (strain RKS4594)).